Here is a 442-residue protein sequence, read N- to C-terminus: 3-phosphoshikimate 1-carboxyvinyltransferase (442 aa).

Residues Lys-25, Ser-26, and Arg-30 each contribute to the 3-phosphoshikimate site. Lys-25 provides a ligand contact to phosphoenolpyruvate. Gly-97 and Arg-125 together coordinate phosphoenolpyruvate. 5 residues coordinate 3-phosphoshikimate: Ser-170, Ser-171, Gln-172, Asp-323, and Lys-350. A phosphoenolpyruvate-binding site is contributed by Gln-172. The active-site Proton acceptor is Asp-323. 2 residues coordinate phosphoenolpyruvate: Arg-354 and Arg-399.

The protein belongs to the EPSP synthase family. As to quaternary structure, monomer.

It localises to the cytoplasm. It carries out the reaction 3-phosphoshikimate + phosphoenolpyruvate = 5-O-(1-carboxyvinyl)-3-phosphoshikimate + phosphate. It participates in metabolic intermediate biosynthesis; chorismate biosynthesis; chorismate from D-erythrose 4-phosphate and phosphoenolpyruvate: step 6/7. Catalyzes the transfer of the enolpyruvyl moiety of phosphoenolpyruvate (PEP) to the 5-hydroxyl of shikimate-3-phosphate (S3P) to produce enolpyruvyl shikimate-3-phosphate and inorganic phosphate. This chain is 3-phosphoshikimate 1-carboxyvinyltransferase, found in Bartonella tribocorum (strain CIP 105476 / IBS 506).